Reading from the N-terminus, the 847-residue chain is B-cell receptor CD22 (847 aa).

The first 19 residues, 1 to 19 (MHLLGPWLLLLVLEYLAFS), serve as a signal peptide directing secretion. The Ig-like V-type domain maps to 20–138 (DSSKWVFEHP…MERIHLNVSE (119 aa)). The Extracellular segment spans residues 20–687 (DSSKWVFEHP…YYSPETIGRR (668 aa)). 3 disulfides stabilise this stretch: cysteine 39/cysteine 167, cysteine 44/cysteine 102, and cysteine 161/cysteine 219. N-linked (GlcNAc...) asparagine glycosylation is found at asparagine 67, asparagine 101, and asparagine 112. Arginine 120 lines the N-acetylneuraminate pocket. N-linked (GlcNAc...) asparagine glycans are attached at residues asparagine 135, asparagine 164, and asparagine 231. Ig-like C2-type domains are found at residues 143-235 (PHIQ…DTVQ), 242-326 (PKLE…VFLQ), 331-416 (PEPS…LDVQ), 419-500 (PKKV…VALN), 505-582 (PRDV…QTAS), and 593-676 (PRRL…STLT). Intrachain disulfides connect cysteine 265–cysteine 309, cysteine 353–cysteine 396, cysteine 442–cysteine 484, and cysteine 529–cysteine 571. Residues asparagine 363, asparagine 445, and asparagine 479 are each glycosylated (N-linked (GlcNAc...) asparagine). N-linked (GlcNAc...) asparagine glycans are attached at residues asparagine 574 and asparagine 634. Cysteine 616 and cysteine 659 are joined by a disulfide. The chain crosses the membrane as a helical span at residues 688-706 (VAVGLGSCLAILILAICGL). At 707 to 847 (KLQRRWKRTQ…ENVDYVILKH (141 aa)) the chain is on the cytoplasmic side. Phosphoserine is present on residues serine 725, serine 726, and serine 729. Short sequence motifs (ITIM motif) lie at residues 760–765 (ISYTTL) and 794–799 (VTYSAL). Tyrosine 762 bears the Phosphotyrosine mark. Residues tyrosine 807, tyrosine 822, and tyrosine 842 each carry the phosphotyrosine modification. 2 consecutive short sequence motifs (ITIM motif) follow at residues 820 to 825 (IHYSEL) and 840 to 845 (VDYVIL).

The protein belongs to the immunoglobulin superfamily. SIGLEC (sialic acid binding Ig-like lectin) family. As to quaternary structure, predominantly monomer of isoform CD22-beta. Also found as heterodimer of isoform CD22-beta and a shorter isoform. Interacts with PTPN6/SHP-1, LYN, SYK, PIK3R1/PIK3R2 and PLCG1 upon phosphorylation. Interacts with GRB2, INPP5D and SHC1 upon phosphorylation. May form a complex with INPP5D/SHIP, GRB2 and SHC1. Phosphorylation of Tyr-762, Tyr-807 and Tyr-822 are involved in binding to SYK, GRB2 and SYK, respectively. Phosphorylation of Tyr-842 is involved in binding to SYK, PLCG2 and PIK3R1/PIK3R2. Post-translationally, phosphorylated on tyrosine residues by LYN. B-lymphocytes.

The protein localises to the cell membrane. Functionally, most highly expressed siglec (sialic acid-binding immunoglobulin-like lectin) on B-cells that plays a role in various aspects of B-cell biology including differentiation, antigen presentation, and trafficking to bone marrow. Binds to alpha 2,6-linked sialic acid residues of surface molecules such as CD22 itself, CD45 and IgM in a cis configuration. Can also bind to ligands on other cells as an adhesion molecule in a trans configuration. Acts as an inhibitory coreceptor on the surface of B-cells and inhibits B-cell receptor induced signaling, characterized by inhibition of the calcium mobilization and cellular activation. Mechanistically, the immunoreceptor tyrosine-based inhibitory motif domain is phosphorylated by the Src kinase LYN, which in turn leads to the recruitment of the protein tyrosine phosphatase 1/PTPN6, leading to the negative regulation of BCR signaling. If this negative signaling from is of sufficient strength, apoptosis of the B-cell can be induced. This Homo sapiens (Human) protein is B-cell receptor CD22.